The sequence spans 251 residues: MAAHLLIVDALNLIRRIHAVQGTPCVETCQHALDQLIIHSQPTHAVAVFDDDARSSGWRHQRLPDYKAGRPPMPDDLHNEMPALRAAFEQRGVRCWASDGNEADDLAATLALKVTEAGHQATIVSTDKGYCQLLSPGLRIRDYFQKRWLDAPFIEKEFGVLPRQLPDYWGLAGISSSKVPGVAGIGPKSATQLLIQFQNLEGIYAHLDEVPEKWRKKLETHKEMAFLCRDIARLQTDLHIDGNLQQLRLAR.

Position 104 (D104) interacts with Mg(2+). One can recognise a 5'-3' exonuclease domain in the interval 160–249; the sequence is VLPRQLPDYW…IDGNLQQLRL (90 aa). L171, A172, P180, V182, and I185 together coordinate K(+). The interval 184–189 is interaction with DNA; the sequence is GIGPKS.

The protein belongs to the Xni family. Mg(2+) is required as a cofactor. K(+) serves as cofactor.

Its function is as follows. Has flap endonuclease activity. During DNA replication, flap endonucleases cleave the 5'-overhanging flap structure that is generated by displacement synthesis when DNA polymerase encounters the 5'-end of a downstream Okazaki fragment. The chain is Flap endonuclease Xni from Salmonella heidelberg (strain SL476).